The chain runs to 239 residues: MKNDVISPEFDENGRPLRRIRSFVRRQGRLTKGQQHALDNIWPVMGVEFNDAPLDFAALFGRDAPVTLEIGFGMGASLVAMAKAKPEQNFLGIEVHSPGVGACLASAEEEGVQNLRVMCHDAVEVLHTMIPDNSLNMVQLFFPDPWHKARHNKRRIVQPPFAELVKSKLKLGGVFHMATDWEAYAVHMLEVMSSLEGYRNQSASNDYVPRPESRPVTKFEQRGHRLGHGVWDLMFERVK.

Residues glutamate 69, glutamate 94, aspartate 121, and aspartate 144 each contribute to the S-adenosyl-L-methionine site. The active site involves aspartate 144. Lysine 148 contacts substrate. Positions 150 to 155 are interaction with RNA; that stretch reads RHNKRR. Residues aspartate 180 and 217–220 each bind substrate; that span reads TKFE.

It belongs to the class I-like SAM-binding methyltransferase superfamily. TrmB family. As to quaternary structure, monomer.

It carries out the reaction guanosine(46) in tRNA + S-adenosyl-L-methionine = N(7)-methylguanosine(46) in tRNA + S-adenosyl-L-homocysteine. It functions in the pathway tRNA modification; N(7)-methylguanine-tRNA biosynthesis. Its function is as follows. Catalyzes the formation of N(7)-methylguanine at position 46 (m7G46) in tRNA. In Klebsiella pneumoniae subsp. pneumoniae (strain ATCC 700721 / MGH 78578), this protein is tRNA (guanine-N(7)-)-methyltransferase.